The chain runs to 253 residues: Zwei Ig domain protein zig-4 (253 aa).

The N-terminal stretch at 1 to 16 is a signal peptide; sequence MFAIALLSFLVVLINA. Ig-like C2-type domains are found at residues 43–146 and 162–245; these read PAKI…AEVE and PEIV…TFLY. 2 cysteine pairs are disulfide-bonded: Cys-67–Cys-130 and Cys-183–Cys-229.

As to expression, expressed in PVT, ASK, BAG, M2 and ASI neurons. In L1 larvae, expressed in pharyngeal ectoderm and mesoderm.

The protein resides in the secreted. Functionally, required for maintaining axon position of PVQ and PVP neurons postembryonically in the ventral nerve cord (VNC) by preventing axons drifting into the opposite side of the VNC that could occur during body growth and movement. The polypeptide is Zwei Ig domain protein zig-4 (Caenorhabditis elegans).